The following is a 534-amino-acid chain: Calcium-dependent protein kinase 18 (534 aa).

The interval 1–49 (MGLCFSSPKATRRGTGSRNPNPDSPTQGKASEKVSNKNKKNTKKIQLRH) is disordered. Gly2 carries the N-myristoyl glycine lipid modification. A compositionally biased stretch (polar residues) spans 14–29 (GTGSRNPNPDSPTQGK). A compositionally biased stretch (basic residues) spans 36–47 (NKNKKNTKKIQL). The Protein kinase domain occupies 71–331 (YTIGKLLGHG…AAQALSHSWV (261 aa)). ATP is bound by residues 77 to 85 (LGHGQFGFT) and Lys100. The active-site Proton acceptor is the Asp197. At Ser237 the chain carries Phosphoserine. The tract at residues 337 to 367 (ASEVPIDISVLNNMRQFVKFSRLKQIALRAL) is autoinhibitory domain. 4 EF-hand domains span residues 374–409 (DELD…DVPW), 411–446 (LKDA…VNQL), 453–488 (KWQQ…KGSI), and 491–518 (LLEE…ASLK). Asp387, Asp389, Asn391, Ser393, Glu398, Asp424, Asn426, Asp428, Glu435, Asp466, Asp468, Asp470, Glu477, Asp496, Asp498, Asp500, and Arg502 together coordinate Ca(2+). Ser504 is modified (phosphoserine). Glu507 is a Ca(2+) binding site.

It belongs to the protein kinase superfamily. Ser/Thr protein kinase family. CDPK subfamily.

It localises to the membrane. The catalysed reaction is L-seryl-[protein] + ATP = O-phospho-L-seryl-[protein] + ADP + H(+). It catalyses the reaction L-threonyl-[protein] + ATP = O-phospho-L-threonyl-[protein] + ADP + H(+). Activated by calcium. Autophosphorylation may play an important role in the regulation of the kinase activity. In terms of biological role, may play a role in signal transduction pathways that involve calcium as a second messenger. This Arabidopsis thaliana (Mouse-ear cress) protein is Calcium-dependent protein kinase 18 (CPK18).